Consider the following 142-residue polypeptide: Non-specific lipid transfer protein GPI-anchored 34 (142 aa).

Residues 1–22 (MAVAVTAVLFLAVVIAPQWTET) form the signal peptide. The segment at 21–43 (ETKKPPRPSDTSDTSGTSGRDRR) is disordered. Over residues 29–38 (SDTSDTSGTS) the composition is skewed to low complexity. 4 disulfides stabilise this stretch: Cys-46/Cys-85, Cys-57/Cys-69, Cys-70/Cys-106, and Cys-83/Cys-114. A lipid anchor (GPI-anchor amidated asparagine) is attached at Asn-120. A propeptide spans 121–142 (GGATKKIVASMGLFGVVASLFF) (removed in mature form).

Belongs to the plant LTP family.

The protein resides in the cell membrane. In terms of biological role, probable lipid transfer protein. This Arabidopsis thaliana (Mouse-ear cress) protein is Non-specific lipid transfer protein GPI-anchored 34.